The following is a 289-amino-acid chain: ATP phosphoribosyltransferase (289 aa).

Belongs to the ATP phosphoribosyltransferase family. Long subfamily. The cofactor is Mg(2+).

It localises to the cytoplasm. The catalysed reaction is 1-(5-phospho-beta-D-ribosyl)-ATP + diphosphate = 5-phospho-alpha-D-ribose 1-diphosphate + ATP. The protein operates within amino-acid biosynthesis; L-histidine biosynthesis; L-histidine from 5-phospho-alpha-D-ribose 1-diphosphate: step 1/9. With respect to regulation, feedback inhibited by histidine. Functionally, catalyzes the condensation of ATP and 5-phosphoribose 1-diphosphate to form N'-(5'-phosphoribosyl)-ATP (PR-ATP). Has a crucial role in the pathway because the rate of histidine biosynthesis seems to be controlled primarily by regulation of HisG enzymatic activity. The polypeptide is ATP phosphoribosyltransferase (Methanosarcina acetivorans (strain ATCC 35395 / DSM 2834 / JCM 12185 / C2A)).